The primary structure comprises 346 residues: MENEEIPEFLSPKEEIVYWRELAKRLKQSYQEARDELIEFQEGSRELEAELETQLVQAEQRNRDLLSDNQRLKCEVESLKEKLEHQYAQSYKQVSLLEDELARARSIKDQLHKYVRELEQANDDLERAKRATIVSLEDFEQRLNQAIERNAFLESELDEKESLLVSVQRLKDEARDLRQELAVRERQTNGTRKSAPSSPTLDCDKTDSAVQASLSLPATPVGKVCDNSFTPPKGIPNGFGTTPLTPSARISALNIVGDLLRKVGALESKLAACRNFAKDQASRKSYTPVGLNSSGGGSSALNSSGVKYSHAGHTSFFDKGAVNGYDPPGVLGSRPPSPPGMLPLSV.

The stretch at 13–190 (KEEIVYWREL…LAVRERQTNG (178 aa)) forms a coiled coil. Disordered regions lie at residues 184 to 205 (RERQTNGTRKSAPSSPTLDCDK) and 325 to 346 (YDPPGVLGSRPPSPPGMLPLSV). Residues 188 to 200 (TNGTRKSAPSSPT) show a composition bias toward polar residues. The span at 335–346 (PPSPPGMLPLSV) shows a compositional bias: pro residues.

The protein belongs to the nudE family. Phosphorylated in mitosis.

Its subcellular location is the cytoplasm. The protein localises to the cytoskeleton. It is found in the microtubule organizing center. It localises to the centrosome. The protein resides in the spindle. In terms of biological role, required for organization of the cellular microtubule array and microtubule anchoring at the centrosome. Positively regulates the activity of the minus-end directed microtubule motor protein dynein. May enhance dynein-mediated microtubule sliding by targeting dynein to the microtubule plus end. Positively regulates lysosome peripheral distribution and ruffled border formation in osteoclasts. This is Nuclear distribution protein nudE-like 1 (ndel1) from Xenopus tropicalis (Western clawed frog).